A 70-amino-acid polypeptide reads, in one-letter code: uncharacterized protein (70 aa).

Residues 1 to 16 form the signal peptide; that stretch reads MKLLLVLITLIIAALA.

This is an uncharacterized protein from Orgyia pseudotsugata (Douglas-fir tussock moth).